A 236-amino-acid polypeptide reads, in one-letter code: Purine nucleoside phosphorylase DeoD-type (236 aa).

An a purine D-ribonucleoside-binding site is contributed by His5. Residues Gly21, Arg25, Arg44, and 88-91 (RVGT) contribute to the phosphate site. Residues 180-182 (DME) and 204-205 (SD) each bind a purine D-ribonucleoside. Catalysis depends on Asp205, which acts as the Proton donor.

Belongs to the PNP/UDP phosphorylase family. In terms of assembly, homohexamer; trimer of homodimers.

It carries out the reaction a purine D-ribonucleoside + phosphate = a purine nucleobase + alpha-D-ribose 1-phosphate. The catalysed reaction is a purine 2'-deoxy-D-ribonucleoside + phosphate = a purine nucleobase + 2-deoxy-alpha-D-ribose 1-phosphate. Catalyzes the reversible phosphorolytic breakdown of the N-glycosidic bond in the beta-(deoxy)ribonucleoside molecules, with the formation of the corresponding free purine bases and pentose-1-phosphate. This Buchnera aphidicola subsp. Schizaphis graminum (strain Sg) protein is Purine nucleoside phosphorylase DeoD-type.